The chain runs to 415 residues: Histidine--tRNA ligase (415 aa).

This sequence belongs to the class-II aminoacyl-tRNA synthetase family. As to quaternary structure, homodimer.

The protein localises to the cytoplasm. It carries out the reaction tRNA(His) + L-histidine + ATP = L-histidyl-tRNA(His) + AMP + diphosphate + H(+). The protein is Histidine--tRNA ligase of Clostridium botulinum (strain Kyoto / Type A2).